A 1189-amino-acid chain; its full sequence is MESTPSFLKGTPTWEKTAPENGIVRQEPGSPPRDGLHHGPLCLGEPAPFWRGVLSTPDSWLPPGFPQGPKDMLPLVEGEGPQNGERKVNWLGSKEGLRWKEAMLTHPLAFCGPACPPRCGPLMPEHSGGHLKSDPVAFRPWHCPFLLETKILERAPFWVPTCLPPYLVSGLPPEHPCDWPLTPHPWVYSGGQPKVPSAFSLGSKGFYYKDPSIPRLAKEPLAAAEPGLFGLNSGGHLQRAGEAERPSLHQRDGEMGAGRQQNPCPLFLGQPDTVPWTSWPACPPGLVHTLGNVWAGPGDGNLGYQLGPPATPRCPSPEPPVTQRGCCSSYPPTKGGGLGPCGKCQEGLEGGASGASEPSEEVNKASGPRACPPSHHTKLKKTWLTRHSEQFECPRGCPEVEERPVARLRALKRAGSPEVQGAMGSPAPKRPPDPFPGTAEQGAGGWQEVRDTSIGNKDVDSGQHDEQKGPQDGQASLQDPGLQDIPCLALPAKLAQCQSCAQAAGEGGGHACHSQQVRRSPLGGELQQEEDTATNSSSEEGPGSGPDSRLSTGLAKHLLSGLGDRLCRLLRREREALAWAQREGQGPAVTEDSPGIPRCCSRCHHGLFNTHWRCPRCSHRLCVACGRVAGTGRAREKAGFQEQSAEECTQEAGHAACSLMLTQFVSSQALAELSTAMHQVWVKFDIRGHCPCQADARVWAPGDAGQQKESTQKTPPTPQPSCNGDTHRTKSIKEETPDSAETPAEDRAGRGPLPCPSLCELLASTAVKLCLGHERIHMAFAPVTPALPSDDRITNILDSIIAQVVERKIQEKALGPGLRAGPGLRKGLGLPLSPVRPRLPPPGALLWLQEPQPCPRRGFHLFQEHWRQGQPVLVSGIQRTLQGNLWGTEALGALGGQVQALSPLGPPQPSSLGSTTFWEGFSWPELRPKSDEGSVLLLHRALGDEDTSRVENLAASLPLPEYCALHGKLNLASYLPPGLALRPLEPQLWAAYGVSPHRGHLGTKNLCVEVADLVSILVHADTPLPAWHRAQKDFLSGLDGEGLWSPGSQVSTVWHVFRAQDAQRIRRFLQMVCPAGAGALEPGAPGSCYLDAGLRRRLREEWGVSCWTLLQAPGEAVLVPAGAPHQVQGLVSTVSVTQHFLSPETSALSAQLCHQGPSLPPDCHLLYAQMDWAVFQAVKVAVGTLQEAK.

5 disordered regions span residues 1–40 (MEST…HHGP), 236–257 (HLQR…EMGA), 349–377 (EGGA…SHHT), 414–480 (AGSP…LQDP), and 505–552 (GEGG…RLST). The segment covering 239–254 (RAGEAERPSLHQRDGE) has biased composition (basic and acidic residues). The span at 457–469 (KDVDSGQHDEQKG) shows a compositional bias: basic and acidic residues. The LXXLL motif 1 motif lies at 566-570 (LCRLL). The C6-type zinc-finger motif lies at 600–625 (CSRCHHGLFNTHWRCPRCSHRLCVAC). The segment at 702-750 (GDAGQQKESTQKTPPTPQPSCNGDTHRTKSIKEETPDSAETPAEDRAGR) is disordered. Over residues 725 to 736 (DTHRTKSIKEET) the composition is skewed to basic and acidic residues. The LXXLL motif 2 signature appears at 758–762 (LCELL). The 212-residue stretch at 946-1157 (DTSRVENLAA…LSAQLCHQGP (212 aa)) folds into the JmjC domain. The Fe cation site is built by C1007, E1009, and H1125.

Fe(2+) is required as a cofactor. Strongest expression of isoforms 1 and 2 is seen in the small intestine, weaker expression in brain and colon, and trace expression is found in liver, pancreas, spleen, thymus, stomach, salivary gland, appendix and trachea. Isoform 1 is always the most abundant. Isoform 1 is exclusively expressed at low levels in kidney and testis. Isoform 2 is exclusively expressed at high levels in the skin.

The protein resides in the nucleus. It catalyses the reaction N(6),N(6)-dimethyl-L-lysyl(9)-[histone H3] + 2 2-oxoglutarate + 2 O2 = L-lysyl(9)-[histone H3] + 2 formaldehyde + 2 succinate + 2 CO2. Its function is as follows. Histone demethylase that specifically demethylates both mono- and dimethylated 'Lys-9' of histone H3. May act as a transcription regulator controlling hair biology (via targeting of collagens), neural activity, and cell cycle. The protein is Lysine-specific demethylase hairless (HR) of Homo sapiens (Human).